A 264-amino-acid polypeptide reads, in one-letter code: 3-methyl-2-oxobutanoate hydroxymethyltransferase (264 aa).

Residues aspartate 45 and aspartate 84 each coordinate Mg(2+). Residues 45–46, aspartate 84, and lysine 112 contribute to the 3-methyl-2-oxobutanoate site; that span reads DS. Glutamate 114 provides a ligand contact to Mg(2+). Glutamate 181 (proton acceptor) is an active-site residue.

The protein belongs to the PanB family. Homodecamer; pentamer of dimers. It depends on Mg(2+) as a cofactor.

It localises to the cytoplasm. The catalysed reaction is 3-methyl-2-oxobutanoate + (6R)-5,10-methylene-5,6,7,8-tetrahydrofolate + H2O = 2-dehydropantoate + (6S)-5,6,7,8-tetrahydrofolate. It participates in cofactor biosynthesis; (R)-pantothenate biosynthesis; (R)-pantoate from 3-methyl-2-oxobutanoate: step 1/2. In terms of biological role, catalyzes the reversible reaction in which hydroxymethyl group from 5,10-methylenetetrahydrofolate is transferred onto alpha-ketoisovalerate to form ketopantoate. The chain is 3-methyl-2-oxobutanoate hydroxymethyltransferase from Shewanella halifaxensis (strain HAW-EB4).